A 363-amino-acid polypeptide reads, in one-letter code: Phosphoribosylformylglycinamidine cyclo-ligase (363 aa).

This sequence belongs to the AIR synthase family.

It localises to the cytoplasm. The catalysed reaction is 2-formamido-N(1)-(5-O-phospho-beta-D-ribosyl)acetamidine + ATP = 5-amino-1-(5-phospho-beta-D-ribosyl)imidazole + ADP + phosphate + H(+). It functions in the pathway purine metabolism; IMP biosynthesis via de novo pathway; 5-amino-1-(5-phospho-D-ribosyl)imidazole from N(2)-formyl-N(1)-(5-phospho-D-ribosyl)glycinamide: step 2/2. This chain is Phosphoribosylformylglycinamidine cyclo-ligase, found in Parvibaculum lavamentivorans (strain DS-1 / DSM 13023 / NCIMB 13966).